The sequence spans 365 residues: Aminomethyltransferase (365 aa).

Belongs to the GcvT family. As to quaternary structure, the glycine cleavage system is composed of four proteins: P, T, L and H.

The catalysed reaction is N(6)-[(R)-S(8)-aminomethyldihydrolipoyl]-L-lysyl-[protein] + (6S)-5,6,7,8-tetrahydrofolate = N(6)-[(R)-dihydrolipoyl]-L-lysyl-[protein] + (6R)-5,10-methylene-5,6,7,8-tetrahydrofolate + NH4(+). In terms of biological role, the glycine cleavage system catalyzes the degradation of glycine. This is Aminomethyltransferase from Natranaerobius thermophilus (strain ATCC BAA-1301 / DSM 18059 / JW/NM-WN-LF).